A 215-amino-acid polypeptide reads, in one-letter code: Probable transaldolase (215 aa).

Catalysis depends on K83, which acts as the Schiff-base intermediate with substrate.

It belongs to the transaldolase family. Type 3B subfamily.

The protein resides in the cytoplasm. The enzyme catalyses D-sedoheptulose 7-phosphate + D-glyceraldehyde 3-phosphate = D-erythrose 4-phosphate + beta-D-fructose 6-phosphate. Its pathway is carbohydrate degradation; pentose phosphate pathway; D-glyceraldehyde 3-phosphate and beta-D-fructose 6-phosphate from D-ribose 5-phosphate and D-xylulose 5-phosphate (non-oxidative stage): step 2/3. In terms of biological role, transaldolase is important for the balance of metabolites in the pentose-phosphate pathway. This Clostridium perfringens (strain 13 / Type A) protein is Probable transaldolase.